The following is a 257-amino-acid chain: Hydroxyacylglutathione hydrolase (257 aa).

His54, His56, Asp58, His59, His113, Asp137, and His175 together coordinate Zn(2+).

This sequence belongs to the metallo-beta-lactamase superfamily. Glyoxalase II family. In terms of assembly, monomer. Requires Zn(2+) as cofactor.

The enzyme catalyses an S-(2-hydroxyacyl)glutathione + H2O = a 2-hydroxy carboxylate + glutathione + H(+). It functions in the pathway secondary metabolite metabolism; methylglyoxal degradation; (R)-lactate from methylglyoxal: step 2/2. In terms of biological role, thiolesterase that catalyzes the hydrolysis of S-D-lactoyl-glutathione to form glutathione and D-lactic acid. The protein is Hydroxyacylglutathione hydrolase of Nostoc sp. (strain PCC 7120 / SAG 25.82 / UTEX 2576).